Reading from the N-terminus, the 285-residue chain is RNA 5'-monophosphate methyltransferase (285 aa).

A disordered region spans residues 1–28 (MAATQELSKGGVEEAVEEDDPAALKPGA). S-adenosyl-L-methionine contacts are provided by residues arginine 46, asparagine 77, aspartate 111, 136–137 (DI), and methionine 165. Positions 53 to 275 (ELLRQLFPPE…KHTEETQAIP (223 aa)) constitute a Bin3-type SAM domain.

The protein belongs to the methyltransferase superfamily. In terms of assembly, interacts with DICER1; the interaction may be mediated by RNA.

The protein resides in the cytoplasm. It catalyses the reaction a 5'-end 5'-phospho-ribonucleoside-RNA + S-adenosyl-L-methionine = a 5'-end (5'-methylphospho)-ribonucleoside-RNA + S-adenosyl-L-homocysteine. The catalysed reaction is a 5'-end 5'-phospho-ribonucleoside-RNA + 2 S-adenosyl-L-methionine = a 5'-end (5'-bismethylphospho)-ribonucleoside-RNA + 2 S-adenosyl-L-homocysteine. O-methyltransferase that specifically monomethylates 5'-monophosphate of cytoplasmic histidyl tRNA (tRNA(His)), acting as a capping enzyme by protecting tRNA(His) from cleavage by DICER1. Also able, with less efficiently, to methylate the 5' monophosphate of a subset of pre-miRNAs, acting as a negative regulator of miRNA processing. The 5' monophosphate of pre-miRNAs is recognized by DICER1 and is required for pre-miRNAs processing: methylation at this position reduces the processing of pre-miRNAs by DICER1. Was also reported to mediate dimethylation of pre-miR-145; however dimethylation cannot be reproduced by another group which observes a monomethylation of pre-miR-145. The protein is RNA 5'-monophosphate methyltransferase of Rattus norvegicus (Rat).